We begin with the raw amino-acid sequence, 457 residues long: Chromosomal replication initiator protein DnaA (457 aa).

Positions 1 to 73 are domain I, interacts with DnaA modulators; it reads MANNYQTLYD…SKYLSEEFKK (73 aa). Positions 73-108 are domain II; that stretch reads KENIVNFEFIIDNEKLLINSNFLIKETNIKNRFNFS. The segment at 109–331 is domain III, AAA+ region; that stretch reads DELLRYNFNN…GNLKQICFWA (223 aa). Positions 156, 158, 159, and 160 each coordinate ATP. Residues 332-457 are domain IV, binds dsDNA; it reads DNDTNKDLII…LQINLIINKF (126 aa).

The protein belongs to the DnaA family. As to quaternary structure, oligomerizes as a right-handed, spiral filament on DNA at oriC.

The protein localises to the cytoplasm. Functionally, plays an essential role in the initiation and regulation of chromosomal replication. ATP-DnaA binds to the origin of replication (oriC) to initiate formation of the DNA replication initiation complex once per cell cycle. Binds the DnaA box (a 9 base pair repeat at the origin) and separates the double-stranded (ds)DNA. Forms a right-handed helical filament on oriC DNA; dsDNA binds to the exterior of the filament while single-stranded (ss)DNA is stabiized in the filament's interior. The ATP-DnaA-oriC complex binds and stabilizes one strand of the AT-rich DNA unwinding element (DUE), permitting loading of DNA polymerase. After initiation quickly degrades to an ADP-DnaA complex that is not apt for DNA replication. Binds acidic phospholipids. The chain is Chromosomal replication initiator protein DnaA from Ureaplasma parvum serovar 3 (strain ATCC 700970).